A 332-amino-acid polypeptide reads, in one-letter code: Malate dehydrogenase, cytoplasmic (332 aa).

NAD(+) is bound by residues 11–17 (GAAGQIA) and Asp42. Residues Arg92 and Arg98 each coordinate substrate. Residues Asn105, Gln112, and 129-131 (VGN) each bind NAD(+). Substrate-binding residues include Asn131 and Arg162. The Proton acceptor role is filled by His187.

Belongs to the LDH/MDH superfamily. MDH type 2 family. As to quaternary structure, homodimer.

It is found in the cytoplasm. The catalysed reaction is (S)-malate + NAD(+) = oxaloacetate + NADH + H(+). By arsenate for both the forward and reverse reactions. In terms of biological role, malate dehydrogenase. Has no activity with NADPH as substrate. Does not show lactate dehydrogenase activity. The polypeptide is Malate dehydrogenase, cytoplasmic (Taenia solium (Pork tapeworm)).